The sequence spans 436 residues: Ribulose bisphosphate carboxylase large chain (436 aa).

Residues Asn104 and Thr154 each coordinate substrate. The active-site Proton acceptor is the Lys156. Substrate is bound at residue Lys158. Mg(2+) is bound by residues Lys182, Asp184, and Glu185. At Lys182 the chain carries N6-carboxylysine. Residue His275 is the Proton acceptor of the active site. The substrate site is built by Arg276, His308, and Ser360.

It belongs to the RuBisCO large chain family. Type I subfamily. As to quaternary structure, heterohexadecamer of 8 large chains and 8 small chains. Mg(2+) is required as a cofactor.

The protein localises to the plastid. The protein resides in the chloroplast. It carries out the reaction 2 (2R)-3-phosphoglycerate + 2 H(+) = D-ribulose 1,5-bisphosphate + CO2 + H2O. The catalysed reaction is D-ribulose 1,5-bisphosphate + O2 = 2-phosphoglycolate + (2R)-3-phosphoglycerate + 2 H(+). Functionally, ruBisCO catalyzes two reactions: the carboxylation of D-ribulose 1,5-bisphosphate, the primary event in carbon dioxide fixation, as well as the oxidative fragmentation of the pentose substrate in the photorespiration process. Both reactions occur simultaneously and in competition at the same active site. In Euglena viridis (Cercaria viridis), this protein is Ribulose bisphosphate carboxylase large chain.